The primary structure comprises 657 residues: Acetyl-coenzyme A synthetase (657 aa).

Residues arginine 192–lysine 195 and threonine 311 each bind CoA. ATP is bound by residues glycine 387–proline 389, aspartate 411–threonine 416, aspartate 504, arginine 519, and arginine 530. Mg(2+) contacts are provided by histidine 543 and valine 546. Arginine 592 contacts CoA. Lysine 617 bears the N6-acetyllysine mark.

Belongs to the ATP-dependent AMP-binding enzyme family. It depends on Mg(2+) as a cofactor. Acetylated. Deacetylation by the SIR2-homolog deacetylase activates the enzyme.

The enzyme catalyses acetate + ATP + CoA = acetyl-CoA + AMP + diphosphate. Functionally, catalyzes the conversion of acetate into acetyl-CoA (AcCoA), an essential intermediate at the junction of anabolic and catabolic pathways. AcsA undergoes a two-step reaction. In the first half reaction, AcsA combines acetate with ATP to form acetyl-adenylate (AcAMP) intermediate. In the second half reaction, it can then transfer the acetyl group from AcAMP to the sulfhydryl group of CoA, forming the product AcCoA. The polypeptide is Acetyl-coenzyme A synthetase (Campylobacter jejuni subsp. jejuni serotype O:2 (strain ATCC 700819 / NCTC 11168)).